A 324-amino-acid chain; its full sequence is Biotin synthase (324 aa).

The Radical SAM core domain occupies 43–273 (FCGNYFNFCS…HVFLRLAGGR (231 aa)). Cys61, Cys65, and Cys68 together coordinate [4Fe-4S] cluster. Positions 105, 138, 198, and 268 each coordinate [2Fe-2S] cluster.

This sequence belongs to the radical SAM superfamily. Biotin synthase family. In terms of assembly, homodimer. The cofactor is [4Fe-4S] cluster. Requires [2Fe-2S] cluster as cofactor.

It catalyses the reaction (4R,5S)-dethiobiotin + (sulfur carrier)-SH + 2 reduced [2Fe-2S]-[ferredoxin] + 2 S-adenosyl-L-methionine = (sulfur carrier)-H + biotin + 2 5'-deoxyadenosine + 2 L-methionine + 2 oxidized [2Fe-2S]-[ferredoxin]. The protein operates within cofactor biosynthesis; biotin biosynthesis; biotin from 7,8-diaminononanoate: step 2/2. In terms of biological role, catalyzes the conversion of dethiobiotin (DTB) to biotin by the insertion of a sulfur atom into dethiobiotin via a radical-based mechanism. This chain is Biotin synthase, found in Campylobacter hominis (strain ATCC BAA-381 / DSM 21671 / CCUG 45161 / LMG 19568 / NCTC 13146 / CH001A).